Reading from the N-terminus, the 855-residue chain is MKLLTAFSPLVVLILFQEQISCYYLTKYASSGYYQDADFVIGGLFSLRVTDGDTFISRSGVEDTSHIAEYVFADLIKYYQHILAMVFAIEKINKDPNILFNKSLGFFLFNVNFIEMKAAEGSMALLSGESPPIPNYSCRPEKTDKLVAVIGGISTSISIQISRVLSLYNVPQISYAPFDQILGTRVQLQSPYQFSMHTAALYQGIVQLLLYFTWIWVGLVVPDDMRGELYLRDITKEMISHGICFAFAEKVTEYSSMDTVNWKHFMERLTLTPVIITVGDTHSLLRIVYFVIFYNLSGNVWITTSDWYITTLPFEQNLIYTHFGGGLSFSFHMDEILGFKDFLRSVQPRKYPHDIFIRHVWSSLFGCPHYYQHRLWDLSQCEPNGSLSTRPLHAWDMNTSPYSYKVYAAVYAIAQALHEELSLRVEGDSSNKCLLQAPLPWKLHPFLQKGQLGRSTNEENTVNKEVSAIKLDIFNYQSLQSGTEAHVKVGEFVFDSHSVQHLSLNDKIITWGKHRSQTPLSVCSQSCPFGFSKTAVEGKPFCCFDCVPCPDGEIANKTDMDQCIKCPEDQYPNKQRNQCLPKIMVFLAHEDPLGTVLVSLAISLSAFSAMILGLFICYRETPIVRANNRNLSYLLLISLKLCFSCSLMFIGQPRTVTCVLRQIIFGIVFSIVISAILAKTFIVVMAFKAIKPGSILKMGMVTRLSNAIVCCGSIIQVCICAVWLGTYPPFPDVDMHSEFGQIILWCNEGSTLAFYCVLGYLGFLASLSLLIAFLARRLPDSFNEAKTITFSMLVFCSVWISFVPAYLSSKGKTMVAVEILSILASSAGLLGCIFLPKCYVILLKSGGHSRKKFFK.

A signal peptide spans 1 to 22 (MKLLTAFSPLVVLILFQEQISC). Residues 23 to 595 (YYLTKYASSG…FLAHEDPLGT (573 aa)) lie on the Extracellular side of the membrane. 2 N-linked (GlcNAc...) asparagine glycosylation sites follow: asparagine 101 and asparagine 295. A helical membrane pass occupies residues 596–616 (VLVSLAISLSAFSAMILGLFI). Residues 617–630 (CYRETPIVRANNRN) lie on the Cytoplasmic side of the membrane. A helical membrane pass occupies residues 631 to 651 (LSYLLLISLKLCFSCSLMFIG). Residues 652 to 662 (QPRTVTCVLRQ) are Extracellular-facing. A helical transmembrane segment spans residues 663-683 (IIFGIVFSIVISAILAKTFIV). Over 684–706 (VMAFKAIKPGSILKMGMVTRLSN) the chain is Cytoplasmic. Residues 707–727 (AIVCCGSIIQVCICAVWLGTY) form a helical membrane-spanning segment. Over 728–753 (PPFPDVDMHSEFGQIILWCNEGSTLA) the chain is Extracellular. Residues 754–774 (FYCVLGYLGFLASLSLLIAFL) form a helical membrane-spanning segment. Residues 775-786 (ARRLPDSFNEAK) are Cytoplasmic-facing. The helical transmembrane segment at 787 to 807 (TITFSMLVFCSVWISFVPAYL) threads the bilayer. The Extracellular portion of the chain corresponds to 808 to 814 (SSKGKTM). The chain crosses the membrane as a helical span at residues 815 to 835 (VAVEILSILASSAGLLGCIFL). Residues 836 to 855 (PKCYVILLKSGGHSRKKFFK) lie on the Cytoplasmic side of the membrane.

This sequence belongs to the G-protein coupled receptor 3 family. Expressed in the basal epithelium of the vomeronasal organ. Located to vomeronasal sensory neurons that project their axons to six to ten glomeruli that reside in globally conserved areas within the caudal accessory olfactory bulb (AOB).

The protein resides in the cell membrane. Its function is as follows. Putative pheromone receptor. The chain is Vomeronasal type-2 receptor 26 (Vmn2r26) from Mus musculus (Mouse).